Reading from the N-terminus, the 758-residue chain is MVRTKNQSSSSSASSSSTKSPIKSSSATGSSGGGVGGRQSTHRSSSASNVAAVVAGGSSAAGGGSSSNRRSPGSSPDGDDDTTTTDDLTPTTCSPRSGHHHTYGGYSSSVHKQNLYVVSFPIIFLFNVLRSLIYQLFCIFRYLYGASTKVIYRPHRRDCNIEIVVQNSSKEQQQSLNHPSELNRDSDGQEQQLSNQPQRFRPIQPLEMAANRPGGGYSPGPGDPLLAKQKHHHRRAFEYISKALKIDEENEGHKELAIELYRKGIKELEDGIAVDCWSGRGDVWDRAQRLHDKMQTNLSMARDRLHFLALREQDLQMQRLSLKEKQNEQAPSKPQRTREPMLAGMTNEPMKLRVRSSGYGPKATTGAQPTASGRKLTIGSKRPVNLAVANKSQTLPRNLGSKTSVGAVQRQPAKTAATPPAVRRQFSSGRNTPPQRSRTPINNNGPSGSGASTPVVSVKGVEQKLVQLILDEIVEGGAKVEWTDIAGQDVAKQALQEMVILPSVRPELFTGLRAPAKGLLLFGPPGNGKTLLARAVATECSATFLNISAASLTSKYVGDGEKLVRALFAVARHMQPSIIFIDEVDSLLSERSSSEHEASRRLKTEFLVEFDGLPGNPDGDRIVVLAATNRPQELDEAALRRFTKRVYVSLPDEQTRELLLNRLLQKQGSPLDTEALRRLAKITDGYSGSDLTALAKDAALEPIRELNVEQVKCLDISAMRAITEQDFHSSLKRIRRSVAPQSLNSYEKWSQDYGDITI.

The disordered stretch occupies residues 1–99; that stretch reads MVRTKNQSSS…PTTCSPRSGH (99 aa). Residues 1 to 121 are Cytoplasmic-facing; sequence MVRTKNQSSS…KQNLYVVSFP (121 aa). The interval 1 to 210 is required for localization to punctate cytoplasmic foci; that stretch reads MVRTKNQSSS…RPIQPLEMAA (210 aa). Composition is skewed to low complexity over residues 8-29, 43-58, 66-76, and 85-95; these read SSSS…SATG, RSSS…AGGS, SSNRRSPGSSP, and TDDLTPTTCSP. Positions 122–142 form an intramembrane region, helical; that stretch reads IIFLFNVLRSLIYQLFCIFRY. Over 143-758 the chain is Cytoplasmic; that stretch reads LYGASTKVIY…WSQDYGDITI (616 aa). Polar residues-rich tracts occupy residues 169–180 and 189–198; these read SKEQQQSLNHPS and QEQQLSNQPQ. Residues 169-221 are disordered; it reads SKEQQQSLNHPSELNRDSDGQEQQLSNQPQRFRPIQPLEMAANRPGGGYSPGP. The sufficient for interaction with microtubules and microtubule severing stretch occupies residues 208 to 758; it reads MAANRPGGGY…WSQDYGDITI (551 aa). Positions 233 to 308 constitute an MIT domain; it reads HRRAFEYISK…SMARDRLHFL (76 aa). 2 disordered regions span residues 353-376 and 390-454; these read RVRS…GRKL and NKSQ…ASTP. Composition is skewed to polar residues over residues 390 to 406 and 425 to 454; these read NKSQ…TSVG and QFSS…ASTP. The segment at 443–455 is required for interaction with microtubules; the sequence is NNGPSGSGASTPV. Residue 523–530 coordinates ATP; it reads GPPGNGKT.

This sequence belongs to the AAA ATPase family. Spastin subfamily. Homohexamer. The homohexamer is stabilized by ATP-binding. The homohexamer may adopt a ring conformation through which microtubules pass prior to being severed. Interacts with microtubules. Interacts with atl; may be involved in microtubule dynamics.

The protein resides in the membrane. It is found in the cytoplasm. It localises to the cytoskeleton. Its subcellular location is the microtubule organizing center. The protein localises to the centrosome. The protein resides in the chromosome. It is found in the lipid droplet. It catalyses the reaction n ATP + n H2O + a microtubule = n ADP + n phosphate + (n+1) alpha/beta tubulin heterodimers.. Functionally, ATP-dependent microtubule severing protein. Stimulates microtubule minus-end depolymerization and poleward microtubule flux in the mitotic spindle. Regulates microtubule stability in the neuromuscular junction synapse. Involved in lipid metabolism by regulating the size and distribution of lipid droplets. Involved in axon regeneration by regulating microtubule severing. This is Spastin from Drosophila yakuba (Fruit fly).